The chain runs to 64 residues: Large ribosomal subunit protein bL35 (64 aa).

The segment covering 1–15 has biased composition (basic residues); that stretch reads MPKNKTHSGTAKRFR. The disordered stretch occupies residues 1–27; it reads MPKNKTHSGTAKRFRVTGSGKLRREQA.

Belongs to the bacterial ribosomal protein bL35 family.

The protein is Large ribosomal subunit protein bL35 of Saccharopolyspora erythraea (strain ATCC 11635 / DSM 40517 / JCM 4748 / NBRC 13426 / NCIMB 8594 / NRRL 2338).